The sequence spans 154 residues: Myoglobin (154 aa).

In terms of domain architecture, Globin spans 2–148; the sequence is GLSDGEWQMV…FRNDIAAKYK (147 aa). 2 positions are modified to phosphoserine: Ser4 and Ser32. Residue His65 participates in nitrite binding. Residue His65 coordinates O2. Thr68 carries the post-translational modification Phosphothreonine. Residue His94 participates in heme b binding. Phosphoserine occurs at positions 121 and 133.

This sequence belongs to the globin family. Monomeric.

It localises to the cytoplasm. Its subcellular location is the sarcoplasm. The enzyme catalyses Fe(III)-heme b-[protein] + nitric oxide + H2O = Fe(II)-heme b-[protein] + nitrite + 2 H(+). It carries out the reaction H2O2 + AH2 = A + 2 H2O. Its function is as follows. Monomeric heme protein which primary function is to store oxygen and facilitate its diffusion within muscle tissues. Reversibly binds oxygen through a pentacoordinated heme iron and enables its timely and efficient release as needed during periods of heightened demand. Depending on the oxidative conditions of tissues and cells, and in addition to its ability to bind oxygen, it also has a nitrite reductase activity whereby it regulates the production of bioactive nitric oxide. Under stress conditions, like hypoxia and anoxia, it also protects cells against reactive oxygen species thanks to its pseudoperoxidase activity. The chain is Myoglobin from Rattus norvegicus (Rat).